The sequence spans 258 residues: Cytolethal distending toxin subunit A (258 aa).

An N-terminal signal peptide occupies residues 1-21; the sequence is MANKRTPIFIAGILIPILLNG. The N-palmitoyl cysteine moiety is linked to residue C22. C22 carries the S-diacylglycerol cysteine lipid modification. The segment at 40-71 is disordered; that stretch reads VEGGPTVPSPDEPGLPLPGPGPALPTNGAIPI. A compositionally biased stretch (pro residues) spans 46 to 62; sequence VPSPDEPGLPLPGPGPA. Residues 93–104 are mediates binding to target cells; that stretch reads WSRGAGSSLWAY. The Ricin B-type lectin domain occupies 125–223; it reads RPNTIQFRNV…EKNFEFMWSI (99 aa). The tract at residues 236 to 258 is disordered; it reads KPEIRPFPPQPIEPDEHSTGGEQ. Residues 249–258 are compositionally biased toward basic and acidic residues; it reads PDEHSTGGEQ.

Heterotrimer of 3 subunits, CdtA, CdtB and CdtC.

It is found in the cell outer membrane. CDTs are cytotoxins which induce host cell distension, growth arrest in G2/M phase, nucleus swelling, and chromatin fragmentation in HeLa cells. CdtA, along with CdtC, probably forms a heterodimeric subunit required for the delivery of CdtB. The sequence is that of Cytolethal distending toxin subunit A (cdtA) from Escherichia coli.